Here is a 338-residue protein sequence, read N- to C-terminus: Nicotinate-nucleotide--dimethylbenzimidazole phosphoribosyltransferase (338 aa).

Glu-305 (proton acceptor) is an active-site residue.

Belongs to the CobT family.

The catalysed reaction is 5,6-dimethylbenzimidazole + nicotinate beta-D-ribonucleotide = alpha-ribazole 5'-phosphate + nicotinate + H(+). It participates in nucleoside biosynthesis; alpha-ribazole biosynthesis; alpha-ribazole from 5,6-dimethylbenzimidazole: step 1/2. Functionally, catalyzes the synthesis of alpha-ribazole-5'-phosphate from nicotinate mononucleotide (NAMN) and 5,6-dimethylbenzimidazole (DMB). The protein is Nicotinate-nucleotide--dimethylbenzimidazole phosphoribosyltransferase of Rhizobium leguminosarum bv. trifolii (strain WSM2304).